A 913-amino-acid chain; its full sequence is Zinc finger protein 112 (913 aa).

The region spanning 8-79 (VTFKDVAVVF…ETETPRDGCS (72 aa)) is the KRAB domain. Lysine 256 is covalently cross-linked (Glycyl lysine isopeptide (Lys-Gly) (interchain with G-Cter in SUMO2)). The C2H2-type 1; degenerate zinc-finger motif lies at 258 to 280 (YPCTGYRKAFSNDSSSEVHQQFH). The C2H2-type 2; degenerate zinc finger occupies 443–465 (YNSEECGNGFSLASHFQDLQIVH). Residues 471–493 (YKRYVCSNSFSHNLYLQGHPKIH) form a C2H2-type 3; degenerate zinc finger. A C2H2-type 4; degenerate zinc finger spans residues 497 to 519 (KPRKEHGNGFNWSSKLKDHQRVH). 13 C2H2-type zinc fingers span residues 525 to 547 (YKCN…QRVH), 553 to 575 (YKCE…QRVH), 581 to 603 (YKCE…QRVH), 609 to 631 (YKCE…QRVH), 637 to 659 (FKCE…QRVH), 665 to 687 (YKCE…QRVH), 693 to 715 (YQCD…QSVH), 721 to 743 (YICE…QRVH), 749 to 771 (YKCE…RRVH), 777 to 799 (YKCE…QRVH), 805 to 827 (YKCE…HRVH), 833 to 855 (YKCE…QRVH), and 861 to 883 (YKCD…QRVH). Residue lysine 890 forms a Glycyl lysine isopeptide (Lys-Gly) (interchain with G-Cter in SUMO2) linkage.

This sequence belongs to the krueppel C2H2-type zinc-finger protein family.

It localises to the nucleus. Functionally, may be involved in transcriptional regulation. In Homo sapiens (Human), this protein is Zinc finger protein 112 (ZNF112).